A 377-amino-acid polypeptide reads, in one-letter code: Succinyl-diaminopimelate desuccinylase (377 aa).

H66 is a binding site for Zn(2+). The active site involves D68. Position 99 (D99) interacts with Zn(2+). The Proton acceptor role is filled by E133. Zn(2+) is bound by residues E134, E162, and H348.

The protein belongs to the peptidase M20A family. DapE subfamily. Homodimer. Zn(2+) serves as cofactor. It depends on Co(2+) as a cofactor.

It catalyses the reaction N-succinyl-(2S,6S)-2,6-diaminopimelate + H2O = (2S,6S)-2,6-diaminopimelate + succinate. Its pathway is amino-acid biosynthesis; L-lysine biosynthesis via DAP pathway; LL-2,6-diaminopimelate from (S)-tetrahydrodipicolinate (succinylase route): step 3/3. Functionally, catalyzes the hydrolysis of N-succinyl-L,L-diaminopimelic acid (SDAP), forming succinate and LL-2,6-diaminopimelate (DAP), an intermediate involved in the bacterial biosynthesis of lysine and meso-diaminopimelic acid, an essential component of bacterial cell walls. This chain is Succinyl-diaminopimelate desuccinylase, found in Marinomonas sp. (strain MWYL1).